The primary structure comprises 205 residues: Large ribosomal subunit protein uL4 (205 aa).

Residues 47–70 (TRAQKSRAEVSGGGKKPFRQKGTG) form a disordered region.

This sequence belongs to the universal ribosomal protein uL4 family. Part of the 50S ribosomal subunit.

In terms of biological role, one of the primary rRNA binding proteins, this protein initially binds near the 5'-end of the 23S rRNA. It is important during the early stages of 50S assembly. It makes multiple contacts with different domains of the 23S rRNA in the assembled 50S subunit and ribosome. Functionally, forms part of the polypeptide exit tunnel. This is Large ribosomal subunit protein uL4 from Acinetobacter baylyi (strain ATCC 33305 / BD413 / ADP1).